A 1039-amino-acid polypeptide reads, in one-letter code: DIS3-like exonuclease 1 (1039 aa).

Residues 221–309 form the CSD1 domain; it reads PEHLPLEILE…KGRNGALCEN (89 aa). The CSD2 domain occupies 359–425; the sequence is VLVMPWDYRI…AEIATILVEN (67 aa). The region spanning 458-807 is the RNB domain; that stretch reads RLDLRKTHLV…VHRLLLAAVN (350 aa).

This sequence belongs to the RNR ribonuclease family. In terms of assembly, component of the RNA exosome complex. The cofactor is Mg(2+).

The protein resides in the cytoplasm. The enzyme catalyses Exonucleolytic cleavage in the 3'- to 5'-direction to yield nucleoside 5'-phosphates.. Functionally, catalytic component of the RNA exosome complex which has 3'-&gt;5' exoribonuclease activity and participates in a multitude of cellular RNA processing and degradation events. This is DIS3-like exonuclease 1 (dis3l) from Xenopus tropicalis (Western clawed frog).